A 719-amino-acid polypeptide reads, in one-letter code: Phosphoribosylformylglycinamidine synthase subunit PurL (719 aa).

H47 is a catalytic residue. ATP-binding residues include Y50 and K89. Residue E91 coordinates Mg(2+). Residues 92 to 95 (SHNH) and R114 each bind substrate. H93 serves as the catalytic Proton acceptor. D115 is a binding site for Mg(2+). A substrate-binding site is contributed by Q238. Residue D266 participates in Mg(2+) binding. 310–312 (ESQ) is a binding site for substrate. Positions 488 and 525 each coordinate ATP. Residue N526 coordinates Mg(2+). S528 is a binding site for substrate.

Belongs to the FGAMS family. Monomer. Part of the FGAM synthase complex composed of 1 PurL, 1 PurQ and 2 PurS subunits.

Its subcellular location is the cytoplasm. It catalyses the reaction N(2)-formyl-N(1)-(5-phospho-beta-D-ribosyl)glycinamide + L-glutamine + ATP + H2O = 2-formamido-N(1)-(5-O-phospho-beta-D-ribosyl)acetamidine + L-glutamate + ADP + phosphate + H(+). The protein operates within purine metabolism; IMP biosynthesis via de novo pathway; 5-amino-1-(5-phospho-D-ribosyl)imidazole from N(2)-formyl-N(1)-(5-phospho-D-ribosyl)glycinamide: step 1/2. In terms of biological role, part of the phosphoribosylformylglycinamidine synthase complex involved in the purines biosynthetic pathway. Catalyzes the ATP-dependent conversion of formylglycinamide ribonucleotide (FGAR) and glutamine to yield formylglycinamidine ribonucleotide (FGAM) and glutamate. The FGAM synthase complex is composed of three subunits. PurQ produces an ammonia molecule by converting glutamine to glutamate. PurL transfers the ammonia molecule to FGAR to form FGAM in an ATP-dependent manner. PurS interacts with PurQ and PurL and is thought to assist in the transfer of the ammonia molecule from PurQ to PurL. The protein is Phosphoribosylformylglycinamidine synthase subunit PurL of Roseobacter denitrificans (strain ATCC 33942 / OCh 114) (Erythrobacter sp. (strain OCh 114)).